Here is a 223-residue protein sequence, read N- to C-terminus: Urease accessory protein UreG (223 aa).

The tract at residues 1-31 is disordered; that stretch reads MAKHSHDHTHDHHDRPRRVRKPGEPLRIGVG. 32-39 serves as a coordination point for GTP; sequence GPVGSGKT.

It belongs to the SIMIBI class G3E GTPase family. UreG subfamily. In terms of assembly, homodimer. UreD, UreF and UreG form a complex that acts as a GTP-hydrolysis-dependent molecular chaperone, activating the urease apoprotein by helping to assemble the nickel containing metallocenter of UreC. The UreE protein probably delivers the nickel.

The protein localises to the cytoplasm. Facilitates the functional incorporation of the urease nickel metallocenter. This process requires GTP hydrolysis, probably effectuated by UreG. In Mycobacterium marinum (strain ATCC BAA-535 / M), this protein is Urease accessory protein UreG.